Consider the following 113-residue polypeptide: T cell receptor alpha variable 12-2 (113 aa).

An N-terminal signal peptide occupies residues 1-20 (MKSLRVLLVILWLQLSWVWS). The Ig-like domain occupies 23–113 (KEVEQNSGPL…DSATYLCAVN (91 aa)). A glycan (N-linked (GlcNAc...) asparagine) is linked at Asn43. An intrachain disulfide couples Cys44 to Cys110.

As to quaternary structure, alpha-beta TR is a heterodimer composed of an alpha and beta chain; disulfide-linked. The alpha-beta TR is associated with the transmembrane signaling CD3 coreceptor proteins to form the TR-CD3 (TcR or TCR). The assembly of alpha-beta TR heterodimers with CD3 occurs in the endoplasmic reticulum where a single alpha-beta TR heterodimer associates with one CD3D-CD3E heterodimer, one CD3G-CD3E heterodimer and one CD247 homodimer forming a stable octameric structure. CD3D-CD3E and CD3G-CD3E heterodimers preferentially associate with TR alpha and TR beta chains, respectively. The association of the CD247 homodimer is the last step of TcR assembly in the endoplasmic reticulum and is required for transport to the cell surface.

The protein localises to the cell membrane. Its function is as follows. V region of the variable domain of T cell receptor (TR) alpha chain that participates in the antigen recognition. Alpha-beta T cell receptors are antigen specific receptors which are essential to the immune response and are present on the cell surface of T lymphocytes. Recognize peptide-major histocompatibility (MH) (pMH) complexes that are displayed by antigen presenting cells (APC), a prerequisite for efficient T cell adaptive immunity against pathogens. Binding of alpha-beta TR to pMH complex initiates TR-CD3 clustering on the cell surface and intracellular activation of LCK that phosphorylates the ITAM motifs of CD3G, CD3D, CD3E and CD247 enabling the recruitment of ZAP70. In turn ZAP70 phosphorylates LAT, which recruits numerous signaling molecules to form the LAT signalosome. The LAT signalosome propagates signal branching to three major signaling pathways, the calcium, the mitogen-activated protein kinase (MAPK) kinase and the nuclear factor NF-kappa-B (NF-kB) pathways, leading to the mobilization of transcription factors that are critical for gene expression and essential for T cell growth and differentiation. The T cell repertoire is generated in the thymus, by V-(D)-J rearrangement. This repertoire is then shaped by intrathymic selection events to generate a peripheral T cell pool of self-MH restricted, non-autoaggressive T cells. Post-thymic interaction of alpha-beta TR with the pMH complexes shapes TR structural and functional avidity. In Homo sapiens (Human), this protein is T cell receptor alpha variable 12-2.